A 295-amino-acid polypeptide reads, in one-letter code: MTSSRPVFRSSWLPYVLVLPQLLITVIFFIWPAGQALWYSVQNLDPFGLSSEFVGMENFRQLFNNPYYLDSFYTTLIFSFLVAGFGMLISLFLAALVDYVIRASRLYQTLIILPYAVAPAVAAVLWMFLFNPGLGLITHFLGLLGYTWNHAQDSGQAMFLVVLASVWKQISYNFLFFLAALQSIPRSLVEAGAIDGAGPVRRFFNLVLPMISPVSFFLLVVNLVYAFFDTFPIIDAATAGGPVQSTTTLIYKIYREGFAGLDLSSSAAQSVILMLLVIGLTVIQFRFVERKVNYQ.

Topologically, residues 1–11 are cytoplasmic; that stretch reads MTSSRPVFRSS. Residues 12–32 traverse the membrane as a helical segment; it reads WLPYVLVLPQLLITVIFFIWP. Residues 33-76 are Periplasmic-facing; it reads AGQALWYSVQNLDPFGLSSEFVGMENFRQLFNNPYYLDSFYTTL. An ABC transmembrane type-1 domain is found at 76–284; the sequence is LIFSFLVAGF…LLVIGLTVIQ (209 aa). A helical transmembrane segment spans residues 77-97; it reads IFSFLVAGFGMLISLFLAALV. Topologically, residues 98-109 are cytoplasmic; that stretch reads DYVIRASRLYQT. A helical membrane pass occupies residues 110-130; it reads LIILPYAVAPAVAAVLWMFLF. The Periplasmic segment spans residues 131 to 157; the sequence is NPGLGLITHFLGLLGYTWNHAQDSGQA. The chain crosses the membrane as a helical span at residues 158–178; the sequence is MFLVVLASVWKQISYNFLFFL. Residues 179-207 lie on the Cytoplasmic side of the membrane; that stretch reads AALQSIPRSLVEAGAIDGAGPVRRFFNLV. Residues 208-228 traverse the membrane as a helical segment; sequence LPMISPVSFFLLVVNLVYAFF. The Periplasmic portion of the chain corresponds to 229–262; the sequence is DTFPIIDAATAGGPVQSTTTLIYKIYREGFAGLD. The chain crosses the membrane as a helical span at residues 263 to 283; the sequence is LSSSAAQSVILMLLVIGLTVI. At 284–295 the chain is on the cytoplasmic side; sequence QFRFVERKVNYQ.

Belongs to the binding-protein-dependent transport system permease family. UgpAE subfamily. In terms of assembly, the complex is composed of two ATP-binding proteins (UgpC), two transmembrane proteins (UgpA and UgpE) and a solute-binding protein (UgpB).

Its subcellular location is the cell inner membrane. Its function is as follows. Part of the ABC transporter complex UgpBAEC involved in sn-glycerol-3-phosphate (G3P) import. Probably responsible for the translocation of the substrate across the membrane. The polypeptide is sn-glycerol-3-phosphate transport system permease protein UgpA (ugpA) (Pectobacterium atrosepticum (strain SCRI 1043 / ATCC BAA-672) (Erwinia carotovora subsp. atroseptica)).